Here is a 117-residue protein sequence, read N- to C-terminus: UPF0251 protein DET0218 (117 aa).

It belongs to the UPF0251 family.

The polypeptide is UPF0251 protein DET0218 (Dehalococcoides mccartyi (strain ATCC BAA-2266 / KCTC 15142 / 195) (Dehalococcoides ethenogenes (strain 195))).